An 86-amino-acid chain; its full sequence is Progonadoliberin-2 (86 aa).

Positions 1-24 (MVSVCRLLLVAALLLCLQAQLSFS) are cleaved as a signal peptide. At Q25 the chain carries Pyrrolidone carboxylic acid. A Glycine amide modification is found at G34.

Belongs to the GnRH family.

Its subcellular location is the secreted. Functionally, stimulates the secretion of gonadotropins. This Clarias gariepinus (North African catfish) protein is Progonadoliberin-2 (gnrh2).